The sequence spans 506 residues: Sugar transport protein 5 (506 aa).

At 1-19 the chain is on the cytoplasmic side; it reads MAGGGLALDVSSAGNIDAK. Transmembrane regions (helical) follow at residues 20-40, 81-101, 117-137, 141-161, 168-188, 201-221, 287-307, 325-345, 352-372, 390-410, 430-450, and 456-476; these read ITAAVVMSCIVAASCGLIFGY, LLTAFTSSLYVAGLVASLVAS, GFTFLFGALINGLAANIAMLI, ILLGFGVGFTNQAAPVYLSEV, GAFNIGFSCFISMGVVAANLI, ISLGLAAVPAAIMTVGCLFIS, LVVAVVIPCFQQLTGITVNAF, IATFILGFVNLGSLLLSTMVI, FLFIAGGILMLLCQIAVAVLL, VTVVVLLCIYAAGFGWSWGPL, LSVAVNFAATFALSQTFLATL, and GAFLFYGGWIFTMTIFVIMFL. Over 477–506 the chain is Cytoplasmic; that stretch reads PETKGIPVDSMYQVWEKHWYWQRFTKPTST.

It belongs to the major facilitator superfamily. Sugar transporter (TC 2.A.1.1) family.

The protein resides in the membrane. Its function is as follows. Mediates an active uptake of hexoses, probably by sugar/hydrogen symport. This Arabidopsis thaliana (Mouse-ear cress) protein is Sugar transport protein 5 (STP5).